A 303-amino-acid polypeptide reads, in one-letter code: MTKIKWLGAFALVFVMLLGGCSLPGLGGASDDTIKIGAQSMTESEIVANMIAQLIEHDTDLNTALVKNLGSNYVQHQAMLGGDIDISATRYSGTDLTSTLGKEAEKDPKKALNIVQNEFQKRFSYKWFDSYGFDNTYAFTVTKKFAEKEHINTVSDLKKNASQYKLGVDNAWLKRKGDGYKGFVSTYGFEFGTTYPMQIGLVYDAVKNGKMDAVLAYSTDGRIKAYDLKILKDDKRFFPPYDCSPVIPEKVLKEHPELEGVINKLIGQIDTETMQELNYEVDGKLKEPSVVAKEFLEKHHYFD.

An N-terminal signal peptide occupies residues 1–20; sequence MTKIKWLGAFALVFVMLLGG. The N-palmitoyl cysteine moiety is linked to residue C21. The S-diacylglycerol cysteine moiety is linked to residue C21.

It belongs to the OsmX family. The complex is composed of two ATP-binding proteins (OpuCA), two transmembrane proteins (OpuCB and OpuCD) and a solute-binding protein (OpuCC).

Its subcellular location is the cell membrane. Member of a high affinity multicomponent binding-protein-dependent transport system for glycine betaine, carnitine, and choline. This is Glycine betaine/carnitine/choline-binding protein OpuCC (opuCC) from Bacillus subtilis (strain 168).